We begin with the raw amino-acid sequence, 451 residues long: MTETLHIVGGGMAGSEAAWQAAQMGVSVVIHEMRPKVGTFAHKTGHLAEMVCSNSFRSDDDEQNAVGLLHWEMRAAGGLIMEMADAHALPAGGALAVDREPFAESVTARLHEHPNIRVEGTEITSLPAEGKWIIATGPLTSGALAEAIAAETGQESLAFFDAIAPILYFDSIDMTKAWMQSRYDKGETEEERTAYLNCPMDRDQYEAFIDALLAAEKTEFKPGETAGYFDGCLPIEVMAERGRETLRHGPMKPVGLTNPHQPDVKAHAVVQLRRDNALGTLYNIVGFQTKMKYGAQKEVLRMIPGLEEARFARLGGIHRNTFINAPTLLDDQMRLHSRPNLRFAGQITGVEGYVESAAMGLLAGRMAAAEILGTPLASPPQETAMGALIHHITGGAEAKTFQPMNVNFGLFPPLDGVRGGRRGRKERYKGYTDRAKAAWQGWLGQTALAAE.

9–14 contributes to the FAD binding site; sequence GGGMAG.

It belongs to the MnmG family. TrmFO subfamily. It depends on FAD as a cofactor.

It localises to the cytoplasm. The enzyme catalyses uridine(54) in tRNA + (6R)-5,10-methylene-5,6,7,8-tetrahydrofolate + NADH + H(+) = 5-methyluridine(54) in tRNA + (6S)-5,6,7,8-tetrahydrofolate + NAD(+). It carries out the reaction uridine(54) in tRNA + (6R)-5,10-methylene-5,6,7,8-tetrahydrofolate + NADPH + H(+) = 5-methyluridine(54) in tRNA + (6S)-5,6,7,8-tetrahydrofolate + NADP(+). Catalyzes the folate-dependent formation of 5-methyl-uridine at position 54 (M-5-U54) in all tRNAs. This is Methylenetetrahydrofolate--tRNA-(uracil-5-)-methyltransferase TrmFO from Dinoroseobacter shibae (strain DSM 16493 / NCIMB 14021 / DFL 12).